The chain runs to 283 residues: Acetylglutamate kinase (283 aa).

Substrate-binding positions include 64 to 65, Arg-86, and Asn-181; that span reads GG.

Belongs to the acetylglutamate kinase family. ArgB subfamily.

It localises to the cytoplasm. It carries out the reaction N-acetyl-L-glutamate + ATP = N-acetyl-L-glutamyl 5-phosphate + ADP. It functions in the pathway amino-acid biosynthesis; L-arginine biosynthesis; N(2)-acetyl-L-ornithine from L-glutamate: step 2/4. Functionally, catalyzes the ATP-dependent phosphorylation of N-acetyl-L-glutamate. The chain is Acetylglutamate kinase from Sulfurovum sp. (strain NBC37-1).